The sequence spans 1337 residues: uncharacterized protein (1337 aa).

Disordered regions lie at residues 1-94 (MPTS…QSSA) and 119-174 (ARDI…PSFF). 2 stretches are compositionally biased toward low complexity: residues 18–37 (SNTS…ASGS) and 68–79 (SSTHFQSSHSVS). Positions 80–94 (NAHNQSPLNQSQSSA) are enriched in polar residues. Residues 123–147 (PQQPSHSQNPSSSSSSSSSQSSQHS) are compositionally biased toward low complexity. Positions 157-167 (NEKKSLDDPSP) are enriched in basic and acidic residues. The next 6 membrane-spanning stretches (helical) occupy residues 209–229 (GLKP…LVLA), 241–261 (FFVV…PMLW), 267–287 (FLLL…ATVA), 328–348 (VRPL…ALFI), 361–381 (CVFS…YPYF), and 387–407 (LFFI…TLFI). 2 disordered regions span residues 623–662 (SHVR…SHKS) and 868–894 (YDEN…DADH). Residues 626–644 (RTGSNNSEAPLAAKTSTTK) are compositionally biased toward polar residues. The span at 868-880 (YDENIHNDVDKDM) shows a compositional bias: basic and acidic residues. A run of 6 helical transmembrane segments spans residues 917–937 (MNVF…PAFC), 975–995 (IFGT…GSGH), 997–1017 (LGNA…IQFI), 1021–1041 (FVIL…LTVT), 1066–1086 (FLTV…PQPR), and 1275–1295 (FAVG…IMFI).

It is found in the membrane. This is an uncharacterized protein from Schizosaccharomyces pombe (strain 972 / ATCC 24843) (Fission yeast).